The chain runs to 254 residues: MQWQDEAIILGVKRHGETSVIAEVMTPSRGRHLGMVRSGRSRTMQPVLQAGNRVDVIWRARLHDHLGEFRIEPLQLRAGQLMETATAVYGVQAMGALLRLLPERDPHPHLYQALDVILDNLHDPVDAGELFVRFELAVLNDLGFGLDLSECAATGLRSDLIYVSPKTGRAVCRTAGAPYAARMLALPAFLGEGQSKAADPESLAAAFRLTDHFLHRHVYDPRGLNENAARDGFVQAALKALERKAEPPALDKAV.

The protein belongs to the RecO family.

Its function is as follows. Involved in DNA repair and RecF pathway recombination. This Agrobacterium fabrum (strain C58 / ATCC 33970) (Agrobacterium tumefaciens (strain C58)) protein is DNA repair protein RecO.